The chain runs to 424 residues: Elongation factor 1-alpha (424 aa).

Residues 5–223 (KPHMNLVIIG…NALQVPAKPV (219 aa)) form the tr-type G domain. Residues 14–21 (GHVDHGKS) form a G1 region. Position 14 to 21 (14 to 21 (GHVDHGKS)) interacts with GTP. S21 contacts Mg(2+). The segment at 70-74 (GVTID) is G2. Residues 91–94 (DAPG) form a G3 region. GTP contacts are provided by residues 91-95 (DAPGH) and 148-151 (NKMD). A G4 region spans residues 148-151 (NKMD). Residues 187–189 (SGY) are G5.

Belongs to the TRAFAC class translation factor GTPase superfamily. Classic translation factor GTPase family. EF-Tu/EF-1A subfamily.

Its subcellular location is the cytoplasm. It catalyses the reaction GTP + H2O = GDP + phosphate + H(+). GTP hydrolase that promotes the GTP-dependent binding of aminoacyl-tRNA to the A-site of ribosomes during protein biosynthesis. This is Elongation factor 1-alpha from Picrophilus torridus (strain ATCC 700027 / DSM 9790 / JCM 10055 / NBRC 100828 / KAW 2/3).